The following is a 401-amino-acid chain: Chalcone synthase 1 (401 aa).

Residue Cys-168 is part of the active site.

This sequence belongs to the thiolase-like superfamily. Chalcone/stilbene synthases family.

It catalyses the reaction (E)-4-coumaroyl-CoA + 3 malonyl-CoA + 3 H(+) = 2',4,4',6'-tetrahydroxychalcone + 3 CO2 + 4 CoA. The protein operates within secondary metabolite biosynthesis; flavonoid biosynthesis. Its function is as follows. The primary product of this enzyme is 4,2',4',6'-tetrahydroxychalcone (also termed naringenin-chalcone or chalcone) which can under specific conditions spontaneously isomerize into naringenin. The protein is Chalcone synthase 1 (CHS1) of Sorghum bicolor (Sorghum).